Reading from the N-terminus, the 476-residue chain is WD repeat, SAM and U-box domain-containing protein 1 (476 aa).

WD repeat units lie at residues 10 to 47 (DHSD…ELPY), 52 to 91 (GHTY…MLAV), 95 to 134 (PTGS…FYRS), 137 to 176 (VKDG…LCNE), 178 to 227 (AHDL…FLGG), 237 to 276 (GHSA…ILHT), and 279 to 318 (QHTR…PCAG). The SAM domain occupies 333-396 (WSEDDVSAWL…LQKIEELRMK (64 aa)). Residues 403-476 (AVPDEFLCPI…ISRWLETQQK (74 aa)) form the U-box domain.

This is WD repeat, SAM and U-box domain-containing protein 1 (WDSUB1) from Gallus gallus (Chicken).